The sequence spans 256 residues: Pyridoxine 5'-phosphate synthase (256 aa).

Residue Asn-12 participates in 3-amino-2-oxopropyl phosphate binding. 14-15 (DH) is a 1-deoxy-D-xylulose 5-phosphate binding site. Arg-23 provides a ligand contact to 3-amino-2-oxopropyl phosphate. The active-site Proton acceptor is His-48. Positions 50 and 55 each coordinate 1-deoxy-D-xylulose 5-phosphate. Catalysis depends on Glu-75, which acts as the Proton acceptor. Thr-105 serves as a coordination point for 1-deoxy-D-xylulose 5-phosphate. The active-site Proton donor is the His-199. 3-amino-2-oxopropyl phosphate-binding positions include Gly-200 and 221–222 (GY).

Belongs to the PNP synthase family. In terms of assembly, homooctamer; tetramer of dimers.

The protein localises to the cytoplasm. It catalyses the reaction 3-amino-2-oxopropyl phosphate + 1-deoxy-D-xylulose 5-phosphate = pyridoxine 5'-phosphate + phosphate + 2 H2O + H(+). The protein operates within cofactor biosynthesis; pyridoxine 5'-phosphate biosynthesis; pyridoxine 5'-phosphate from D-erythrose 4-phosphate: step 5/5. Its function is as follows. Catalyzes the complicated ring closure reaction between the two acyclic compounds 1-deoxy-D-xylulose-5-phosphate (DXP) and 3-amino-2-oxopropyl phosphate (1-amino-acetone-3-phosphate or AAP) to form pyridoxine 5'-phosphate (PNP) and inorganic phosphate. This is Pyridoxine 5'-phosphate synthase from Bradyrhizobium sp. (strain ORS 278).